A 238-amino-acid polypeptide reads, in one-letter code: Large ribosomal subunit protein uL1 (238 aa).

Belongs to the universal ribosomal protein uL1 family. Part of the 50S ribosomal subunit.

In terms of biological role, binds directly to 23S rRNA. The L1 stalk is quite mobile in the ribosome, and is involved in E site tRNA release. Protein L1 is also a translational repressor protein, it controls the translation of the L11 operon by binding to its mRNA. In Trichormus variabilis (strain ATCC 29413 / PCC 7937) (Anabaena variabilis), this protein is Large ribosomal subunit protein uL1.